The chain runs to 126 residues: RutC family protein SSO3206 (126 aa).

Belongs to the RutC family.

This chain is RutC family protein SSO3206, found in Saccharolobus solfataricus (strain ATCC 35092 / DSM 1617 / JCM 11322 / P2) (Sulfolobus solfataricus).